A 591-amino-acid chain; its full sequence is Developmental and secondary metabolism regulator VEA1 (591 aa).

The segment at 1-22 is disordered; that stretch reads MATKASSILHPPNETEHTMSRI. Over residues 13–22 the composition is skewed to basic and acidic residues; the sequence is NETEHTMSRI. The Velvet domain maps to 26-235; sequence GKKLTYNLKV…AEQGCRVRIR (210 aa). The Nuclear localization signal motif lies at 40–45; it reads ERARAC. The tract at residues 238-547 is disordered; it reads VRMRRREPKP…TSGGSDDEIM (310 aa). A compositionally biased stretch (basic and acidic residues) spans 245–260; sequence PKPNKDYGAYDDRRIT. Over residues 306-321 the composition is skewed to polar residues; it reads HQQPSPNLAATPQSHL. Positions 330-347 are enriched in pro residues; sequence YHAPPPPPTAHPAPPPAY. The span at 386–395 shows a compositional bias: polar residues; the sequence is YDQSKSSLPM. Residues 422-433 show a composition bias toward low complexity; sequence PSQLHPTQQYQQ. Positions 434 to 448 are enriched in pro residues; that stretch reads PTPPPPPPAAIAPHP. Residues 452 to 493 form a PEST region; the sequence is RTPTKPSPSTFFPPTPSRLSVEVDSSNEADDAILNAIRTRRG. Over residues 494-516 the composition is skewed to basic and acidic residues; the sequence is YILDEKSGATKRSRDSSDHDLKP.

Belongs to the velvet family. VeA subfamily. Component of the heterotrimeric velvet complex composed of LAE1, VEA1 and VEL2; VEA1 acting as a bridging protein between LAE1 and VEL2.

It localises to the nucleus. The protein resides in the cytoplasm. Component of the velvet transcription factor complex that controls sexual/asexual developmental ratio in response to light, promoting sexual development in the darkness while stimulating asexual sporulation under illumination. The velvet complex hat acts as a global regulator for secondary metabolite gene expression. Regulates cleistothecial formation and hyphal growth. Acts as a positive regulator of virulence. This Ajellomyces capsulatus (Darling's disease fungus) protein is Developmental and secondary metabolism regulator VEA1.